The sequence spans 354 residues: Gibberellin receptor GID1 (354 aa).

The Involved in the stabilization of the negatively charged intermediate by the formation of the oxyanion hole signature appears at 120–122; that stretch reads HGG. Gibberellin A3 contacts are provided by residues 122 to 123, Y134, S198, and D250; that span reads GS. Residues 122–123, Y134, and S198 contribute to the gibberellin A4 site; that span reads GS. Residue S198 is part of the active site. Residue D296 is part of the active site. G327 is a gibberellin A3 binding site. G327 contributes to the gibberellin A4 binding site.

Belongs to the 'GDXG' lipolytic enzyme family. Interacts with the DELLA protein SLR1 in a GA-dependent manner, resulting in subsequent SLR1 degradation.

It is found in the nucleus. Functions as a soluble gibberellin (GA) receptor. GA is an essential hormone that regulates growth and development in plants. Binds with high affinity the biologically active GAs such as GA1, GA3 and GA4, but has low or no affinity for the biologically inactive GAs. Upon GA-binding, it interacts with the DELLA protein SLR1, a repressor of GA signaling. This leads to SLR1 degradation by the proteasome, allowing the GA signaling pathway. This is Gibberellin receptor GID1 from Oryza sativa subsp. japonica (Rice).